The sequence spans 483 residues: UDP-glucosyl transferase 73B2 (483 aa).

Residue H22 is the Proton acceptor of the active site. H22 serves as a coordination point for an anthocyanidin. D133 functions as the Charge relay in the catalytic mechanism. UDP-alpha-D-glucose is bound by residues A355, Q357, H372, W375, N376, S377, and E380. A395 provides a ligand contact to an anthocyanidin. UDP-alpha-D-glucose-binding residues include E396 and Q397.

The protein belongs to the UDP-glycosyltransferase family. Expressed in roots and flowers.

The catalysed reaction is a 7-O-hydroxy-flavonol + UDP-alpha-D-glucose = a flavonol 7-O-beta-D-glucoside + UDP + H(+). It functions in the pathway secondary metabolite biosynthesis; flavonoid biosynthesis. Functionally, catalyzes the glycosylation of flavonoids from UDP-glucose. Uses a wide range of flavonoid substrates including flavonols (quercetin, kaempferol, isorhamnetin, 3-OH 7,2',4'-MeO-flavone), flavones (luteolin, apigenin), flavanones (naringenin, hesperetin), flavanonols (taxifolin), isoflavones (genistein, daidzein), flavonol glycosides (quercitrin, isoquercitrin, rutin), and chalcones (isoliquiritigenin). Specific for the C-7 position, with a 20-fold lower activity for the C-3 position. The sequence is that of UDP-glucosyl transferase 73B2 (UGT73B2) from Arabidopsis thaliana (Mouse-ear cress).